Here is a 103-residue protein sequence, read N- to C-terminus: Glycoprotein 24B (103 aa).

Belongs to the csb family. O-glycosylated.

The protein localises to the cell surface. Cell-cell adhesion during early development. This Dictyostelium discoideum (Social amoeba) protein is Glycoprotein 24B (csbB).